Here is a 578-residue protein sequence, read N- to C-terminus: Probable actinorhodin transporter (578 aa).

The tract at residues 1–33 (MSSVEADEPDRATAPPSALLPEDGPGPDGTAAG) is disordered. 12 consecutive transmembrane segments (helical) span residues 78 to 98 (VIQW…VVGG), 109 to 129 (MFVV…VAAG), 135 to 155 (AARF…LGLI), 170 to 190 (AFGP…GFLV), 202 to 222 (VFLI…LLLP), 232 to 252 (FDVV…FPLV), 259 to 279 (WPAW…GFVA), 306 to 326 (GLAV…LLAL), 341 to 361 (LTMT…GAVL), 369 to 389 (ALHG…LTIG), 444 to 464 (LGFT…LGSQ), and 546 to 566 (AMVR…ALAF).

This sequence belongs to the major facilitator superfamily. EmrB family.

Its subcellular location is the cell membrane. Its function is as follows. Promotes the efflux of actinorhodin. The chain is Probable actinorhodin transporter (actII-2) from Streptomyces coelicolor (strain ATCC BAA-471 / A3(2) / M145).